We begin with the raw amino-acid sequence, 79 residues long: Short neurotoxin 1/5 (79 aa).

The first 21 residues, 1-21 (MKTLLLTLVMVTIMCLDLGYT), serve as a signal peptide directing secretion. Cystine bridges form between cysteine 24–cysteine 41, cysteine 34–cysteine 59, cysteine 63–cysteine 71, and cysteine 72–cysteine 77.

The protein belongs to the three-finger toxin family. Short-chain subfamily. Type III alpha-neurotoxin sub-subfamily. As to expression, expressed by the venom gland.

It is found in the secreted. Binds with high affinity to muscle nicotinic acetylcholine receptor (nAChR) and inhibit acetylcholine from binding to the receptor, thereby impairing neuromuscular transmission. Compete with the binding of alpha-bungarotoxin on muscle AChR (from Torpedo) with an IC(50) of 0.31 uM (SNTX1) and 3.1 uM (SNTX5). Is able of exerting muscle paralysis, spasms and increased respiration. The protein is Short neurotoxin 1/5 of Pseudonaja textilis (Eastern brown snake).